A 210-amino-acid chain; its full sequence is Calcium-activated potassium channel subunit beta-4 (210 aa).

Residues methionine 1–arginine 19 are Cytoplasmic-facing. The helical transmembrane segment at leucine 20–leucine 40 threads the bilayer. Topologically, residues serine 41–glutamate 167 are extracellular. Residues asparagine 53 and asparagine 90 are each glycosylated (N-linked (GlcNAc...) asparagine). The helical transmembrane segment at isoleucine 168–valine 188 threads the bilayer. The Cytoplasmic portion of the chain corresponds to valine 189 to serine 210.

Belongs to the KCNMB (TC 8.A.14.1) family. KCNMB4 subfamily. As to quaternary structure, interacts with KCNMA1 tetramer. There are probably 4 molecules of KCMNB4 per KCNMA1 tetramer. Interacts with FMR1 (via N-terminus). Phosphorylated. Phosphorylation modulates its effect on KCNMA1 activation kinetics. In terms of processing, N-glycosylated. A highly glycosylated form is promoted by KCNMA1. Glycosylation, which is not required for the interaction with KCNMA1 and subcellular location, increases protection against charybdotoxin. In terms of tissue distribution, predominantly expressed in brain. In brain, it is expressed in the cerebellum, cerebral cortex, medulla, spinal cord, occipital pole, frontal lobe, temporal lobe, putamen, amygdala, caudate nucleus, corpus callosum, hippocampus, substantia nigra and thalamus. Weakly or not expressed in other tissues.

The protein localises to the membrane. Its function is as follows. Regulatory subunit of the calcium activated potassium KCNMA1 (maxiK) channel. Modulates the calcium sensitivity and gating kinetics of KCNMA1, thereby contributing to KCNMA1 channel diversity. Decreases the gating kinetics and calcium sensitivity of the KCNMA1 channel, but with fast deactivation kinetics. May decrease KCNMA1 channel openings at low calcium concentrations but increases channel openings at high calcium concentrations. Makes KCNMA1 channel resistant to 100 nM charybdotoxin (CTX) toxin concentrations. The sequence is that of Calcium-activated potassium channel subunit beta-4 (KCNMB4) from Homo sapiens (Human).